A 213-amino-acid chain; its full sequence is Orotate phosphoribosyltransferase (213 aa).

Lysine 26 serves as a coordination point for 5-phospho-alpha-D-ribose 1-diphosphate. 34–35 (FF) lines the orotate pocket. 5-phospho-alpha-D-ribose 1-diphosphate contacts are provided by residues 72-73 (YK), arginine 99, lysine 100, lysine 103, histidine 105, and 124-132 (DDVITAGTA). The orotate site is built by threonine 128 and arginine 156.

It belongs to the purine/pyrimidine phosphoribosyltransferase family. PyrE subfamily. In terms of assembly, homodimer. It depends on Mg(2+) as a cofactor.

The catalysed reaction is orotidine 5'-phosphate + diphosphate = orotate + 5-phospho-alpha-D-ribose 1-diphosphate. The protein operates within pyrimidine metabolism; UMP biosynthesis via de novo pathway; UMP from orotate: step 1/2. Catalyzes the transfer of a ribosyl phosphate group from 5-phosphoribose 1-diphosphate to orotate, leading to the formation of orotidine monophosphate (OMP). The protein is Orotate phosphoribosyltransferase of Shigella dysenteriae serotype 1 (strain Sd197).